Reading from the N-terminus, the 209-residue chain is Uridine kinase (209 aa).

G12–T19 lines the ATP pocket.

This sequence belongs to the uridine kinase family.

Its subcellular location is the cytoplasm. The enzyme catalyses uridine + ATP = UMP + ADP + H(+). It catalyses the reaction cytidine + ATP = CMP + ADP + H(+). It participates in pyrimidine metabolism; CTP biosynthesis via salvage pathway; CTP from cytidine: step 1/3. It functions in the pathway pyrimidine metabolism; UMP biosynthesis via salvage pathway; UMP from uridine: step 1/1. The protein is Uridine kinase of Chloroflexus aurantiacus (strain ATCC 29366 / DSM 635 / J-10-fl).